A 454-amino-acid chain; its full sequence is NADP-specific glutamate dehydrogenase (454 aa).

Residue Ser2 is modified to N-acetylserine. The active site involves Lys114.

It belongs to the Glu/Leu/Phe/Val dehydrogenases family. As to quaternary structure, homohexamer.

It catalyses the reaction L-glutamate + NADP(+) + H2O = 2-oxoglutarate + NH4(+) + NADPH + H(+). This Neurospora crassa (strain ATCC 24698 / 74-OR23-1A / CBS 708.71 / DSM 1257 / FGSC 987) protein is NADP-specific glutamate dehydrogenase (gdh).